The primary structure comprises 342 residues: Pre-mRNA-splicing factor 18 (342 aa).

The residue at position 1 (Met1) is an N-acetylmethionine.

The protein belongs to the PRP18 family. As to quaternary structure, heterodimer with PPIH. Interacts with PRPF4 and with the spliceosome. Part of a complex containing U4/U6 snRNPs.

It is found in the nucleus speckle. Functionally, participates in the second step of pre-mRNA splicing. This is Pre-mRNA-splicing factor 18 (PRPF18) from Pongo abelii (Sumatran orangutan).